A 272-amino-acid polypeptide reads, in one-letter code: MASSSSNRQFSHRNANTFLTYPKCPENPEIACQMIWELVVRWIPKYILCAREAHKDGSLHLHALLQTEKPVRISDSRFFDINGFHPNIQSAKSVNRVRDYILKEPLAVFERGTFIPRKSPFLGKSDSEVKEKKPSKDEIMRDIISHATSKEEYLSMIQKELPFDWSTKLQYFEYSANKLFPEIQEEFTNPHPPSSPDLLCNESINDWLQPNIFQVSPEAYMLLQPTCYTLEDAISDLQWMDSVSSHQMKDQESRASTSSAQQEPENLLGPEA.

A CRESS-DNA virus Rep endonuclease domain is found at 11–114; that stretch reads SHRNANTFLT…PLAVFERGTF (104 aa). An RCR-1 motif is present at residues 18 to 21; sequence FLTY. Glu-52, His-60, and His-62 together coordinate a divalent metal cation. Residues 60–62 carry the RCR-2 motif; the sequence is HLH. Residue Tyr-100 is the For DNA cleavage activity of the active site. Residues 100–103 carry the RCR-3 motif; it reads YILK. Glu-104 is an a divalent metal cation binding site. The tract at residues 175 to 187 is oligomerization; the sequence is SANKLFPEIQEEF. A binding to RBR1 region spans residues 198–202; the sequence is LLCNE. Residues 221–230 form a transactivation region; the sequence is MLLQPTCYTL. Residues 245–272 are disordered; the sequence is SHQMKDQESRASTSSAQQEPENLLGPEA. A compositionally biased stretch (polar residues) spans 254–264; that stretch reads RASTSSAQQEP.

The protein belongs to the geminiviridae Rep protein family. In terms of assembly, homooligomer. Interacts with host retinoblastoma-related protein 1 (RBR1), and may thereby deregulate the host cell cycle. Part of the C- and V-complexes which are RepA-Rep-DNA complexes involved in the c-sense and v-sense transcription. The cofactor is Mg(2+). Mn(2+) is required as a cofactor.

It is found in the host nucleus. The protein localises to the host cytoplasm. Functionally, implicated in enhancement of V-sense gene expression. Acts a an inhibitor of C-sense gene transcription. The polypeptide is Replication-associated protein A (Maize streak virus genotype A (isolate Nigeria) (MSV)).